A 326-amino-acid polypeptide reads, in one-letter code: Protein-ribulosamine 3-kinase, chloroplastic (326 aa).

The transit peptide at 1–30 (MAVASLSICFSARPHLLLRNFSPRPKFVAM) directs the protein to the chloroplast. ATP is bound at residue 125-127 (EFI). The Proton acceptor role is filled by D230.

It belongs to the fructosamine kinase family.

The protein resides in the plastid. It localises to the chloroplast. It catalyses the reaction N(6)-D-ribulosyl-L-lysyl-[protein] + ATP = N(6)-(3-O-phospho-D-ribulosyl)-L-lysyl-[protein] + ADP + H(+). The enzyme catalyses N(6)-(D-erythrulosyl)-L-lysyl-[protein] + ATP = N(6)-(3-O-phospho-D-erythrulosyl)-L-lysyl-[protein] + ADP + H(+). In terms of biological role, initiates a process leading to the deglycation of proteins. Phosphorylates low-molecular-mass and protein-bound erythrulosamines and ribulosamines, but not fructosamines or psicosamines, on the third carbon of the sugar moiety. Protein-bound erythrulosamine 3-phosphates and ribulosamine 3-phosphates are unstable and decompose under physiological conditions. The sequence is that of Protein-ribulosamine 3-kinase, chloroplastic from Arabidopsis thaliana (Mouse-ear cress).